The chain runs to 638 residues: Probable beta-glucosidase C (638 aa).

The N-terminal stretch at 1 to 18 (MKVLAPGYLAEASLTALA) is a signal peptide. Residues N40, N94, N116, N223, and N274 are each glycosylated (N-linked (GlcNAc...) asparagine). Residue D341 is part of the active site. Residues N364, N480, N488, and N528 are each glycosylated (N-linked (GlcNAc...) asparagine).

The protein belongs to the glycosyl hydrolase 3 family.

It is found in the secreted. The catalysed reaction is Hydrolysis of terminal, non-reducing beta-D-glucosyl residues with release of beta-D-glucose.. The protein operates within glycan metabolism; cellulose degradation. Beta-glucosidases are one of a number of cellulolytic enzymes involved in the degradation of cellulosic biomass. Catalyzes the last step releasing glucose from the inhibitory cellobiose. This Aspergillus oryzae (strain ATCC 42149 / RIB 40) (Yellow koji mold) protein is Probable beta-glucosidase C (bglC).